The following is a 279-amino-acid chain: MAATAVTLPSSPAPFPVTTTASSSRNVRLLLRSPPPRRALRVAASAAADAPPKPAPPPTSPSGIVLVDPTEAQKVHRLKAVYDQKVVPLITEEFGYTNVHQVPKVEKIVVNCGLGAEAGNSKGLESAMKDLAMITGQWPVKTKAKKSVASFKIREGNTIGIAVTLRGRVMFNFLDRLINLGLPRTMDFLGVNPNSFDGHGNFTIGLRDQGVFPEIPYEVGGKKNGMDVCIVTTAKTDNEALRLLTLLGMPFAEHIKSSVVIRKKRLKRHHFMSKGRGRR.

2 disordered regions span residues 1–23 (MAATAVTLPSSPAPFPVTTTASS) and 40–63 (LRVAASAAADAPPKPAPPPTSPSG). Residues 1 to 43 (MAATAVTLPSSPAPFPVTTTASSSRNVRLLLRSPPPRRALRVA) constitute a chloroplast transit peptide. Over residues 41–50 (RVAASAAADA) the composition is skewed to low complexity. Pro residues predominate over residues 51 to 60 (PPKPAPPPTS).

Belongs to the universal ribosomal protein uL5 family. Part of the 50S ribosomal subunit; contacts the 5S rRNA.

It localises to the plastid. Its subcellular location is the chloroplast. Binds 5S rRNA, forms part of the central protuberance of the 50S subunit. This chain is Large ribosomal subunit protein uL5c (RPL5), found in Oryza sativa subsp. japonica (Rice).